We begin with the raw amino-acid sequence, 166 residues long: Putative transmembrane protein ORF166 (166 aa).

3 helical membrane passes run 35 to 55 (IILV…FAGL), 60 to 80 (PICV…FVTA), and 124 to 144 (IFCL…AFIN).

It is found in the host membrane. This is Putative transmembrane protein ORF166 from Acidianus convivator (ABV).